Consider the following 316-residue polypeptide: MAPKAKIVLVGSGMIGGVMATLIVQKNLGDVVMFDIVKNMPHGKALDTSHTNVMAYSNCKVSGSNTYDDLKDADVVIVTAGFTKAPGKSDKEWNRDDLLPLNNKIMIEIGGHIKNNCPNAFIIVVTNPVDVMVQLLHQHSGVPKNKIVGLGGVLDTSRLKYYISQKLNVCPRDVNAHIVGAHGNKMVLLKRYITVGGIPLQEFINNKKITDQELDAIFDRTINTALEIVNLHASPYVAPAAAIIEMAESYIRDLRKVLICSTLLEGQYGHKDIFAGTPLVIGGNGVEQVIELQLNADEKKKFDEAVAETSRMKALI.

NAD(+) is bound by residues 13–15 (GMI), 34–36 (FDI), tyrosine 67, and 79–83 (TAGFT). Residue arginine 95 coordinates substrate. Residues 125 to 127 (VTN), leucine 150, and leucine 154 each bind NAD(+). Residues arginine 158 and histidine 182 each contribute to the substrate site. Histidine 182 lines the NAD(+) pocket. Histidine 182 serves as the catalytic Proton acceptor.

The protein belongs to the LDH/MDH superfamily. LDH family. In terms of assembly, homotetramer.

The catalysed reaction is (S)-lactate + NAD(+) = pyruvate + NADH + H(+). It functions in the pathway fermentation; pyruvate fermentation to lactate; (S)-lactate from pyruvate: step 1/1. This Plasmodium berghei protein is L-lactate dehydrogenase.